A 192-amino-acid polypeptide reads, in one-letter code: Phosphoheptose isomerase (192 aa).

Residues 37–192 enclose the SIS domain; sequence LADSFKGGGK…IQLIEKEMVK (156 aa). 52-54 is a binding site for substrate; that stretch reads NGG. Positions 61 and 65 each coordinate Zn(2+). Residues E65, 93 to 94, 119 to 121, S124, and Q172 each bind substrate; these read ND and STS. Zn(2+) is bound by residues Q172 and H180.

This sequence belongs to the SIS family. GmhA subfamily. In terms of assembly, homotetramer. Zn(2+) serves as cofactor.

The protein resides in the cytoplasm. The catalysed reaction is 2 D-sedoheptulose 7-phosphate = D-glycero-alpha-D-manno-heptose 7-phosphate + D-glycero-beta-D-manno-heptose 7-phosphate. It participates in carbohydrate biosynthesis; D-glycero-D-manno-heptose 7-phosphate biosynthesis; D-glycero-alpha-D-manno-heptose 7-phosphate and D-glycero-beta-D-manno-heptose 7-phosphate from sedoheptulose 7-phosphate: step 1/1. Functionally, catalyzes the isomerization of sedoheptulose 7-phosphate in D-glycero-D-manno-heptose 7-phosphate. The protein is Phosphoheptose isomerase of Escherichia coli O7:K1 (strain IAI39 / ExPEC).